Consider the following 237-residue polypeptide: Class B acid phosphatase (237 aa).

The N-terminal stretch at 1–25 (MRKITLALSAACLLFSLNNAVVARA) is a signal peptide. Asp-69 functions as the Nucleophile in the catalytic mechanism. Residues Asp-69 and Asp-71 each contribute to the Mg(2+) site. Residue Asp-71 is the Proton donor of the active site. Substrate is bound by residues 137 to 138 (TG) and Lys-177. Residue Asp-192 participates in Mg(2+) binding.

The protein belongs to the class B bacterial acid phosphatase family. As to quaternary structure, homotetramer. Requires Mg(2+) as cofactor.

Its subcellular location is the periplasm. It carries out the reaction a phosphate monoester + H2O = an alcohol + phosphate. Dephosphorylates several organic phosphate monoesters. Also has a phosphotransferase activity catalyzing the transfer of low-energy phosphate groups from organic phosphate monoesters to free hydroxyl groups of various organic compounds. The polypeptide is Class B acid phosphatase (Enterobacter sp. (strain 638)).